The primary structure comprises 461 residues: ATP synthase subunit beta (461 aa).

Residue 151–158 (GGAGVGKT) participates in ATP binding.

It belongs to the ATPase alpha/beta chains family. In terms of assembly, F-type ATPases have 2 components, CF(1) - the catalytic core - and CF(0) - the membrane proton channel. CF(1) has five subunits: alpha(3), beta(3), gamma(1), delta(1), epsilon(1). CF(0) has three main subunits: a(1), b(2) and c(9-12). The alpha and beta chains form an alternating ring which encloses part of the gamma chain. CF(1) is attached to CF(0) by a central stalk formed by the gamma and epsilon chains, while a peripheral stalk is formed by the delta and b chains.

It is found in the cell inner membrane. It catalyses the reaction ATP + H2O + 4 H(+)(in) = ADP + phosphate + 5 H(+)(out). Its function is as follows. Produces ATP from ADP in the presence of a proton gradient across the membrane. The catalytic sites are hosted primarily by the beta subunits. The protein is ATP synthase subunit beta of Coxiella burnetii (strain RSA 331 / Henzerling II).